The following is a 289-amino-acid chain: Enoyl-CoA delta isomerase 1, mitochondrial (289 aa).

The N-terminal 28 residues, 1 to 28 (MALAAARRVLLQAGSRLGRRGAVDGARR), are a transit peptide targeting the mitochondrion. N6-acetyllysine; alternate is present on K48. At K48 the chain carries N6-succinyllysine; alternate. K71 carries the post-translational modification N6-succinyllysine. K76 carries the post-translational modification N6-acetyllysine. Residues 93 to 97 (AGLDL), G140, and N164 contribute to the substrate site. 3 positions are modified to N6-acetyllysine; alternate: K222, K229, and K255. K222, K229, and K255 each carry N6-succinyllysine; alternate. At K275 the chain carries N6-succinyllysine. At K283 the chain carries N6-acetyllysine; alternate. Position 283 is an N6-succinyllysine; alternate (K283).

This sequence belongs to the enoyl-CoA hydratase/isomerase family. In terms of assembly, homotrimer.

The protein localises to the mitochondrion matrix. The enzyme catalyses a (3Z)-enoyl-CoA = a 4-saturated (2E)-enoyl-CoA. The catalysed reaction is a (3E)-enoyl-CoA = a 4-saturated (2E)-enoyl-CoA. It carries out the reaction (3Z)-octenoyl-CoA = (2E)-octenoyl-CoA. It catalyses the reaction (2E)-tetradecenoyl-CoA = (3Z)-tetradecenoyl-CoA. The enzyme catalyses (3Z)-dodecenoyl-CoA = (2E)-dodecenoyl-CoA. The catalysed reaction is (3Z)-hexenoyl-CoA = (2E)-hexenoyl-CoA. It carries out the reaction (3Z)-decenoyl-CoA = (2E)-decenoyl-CoA. The protein operates within lipid metabolism; fatty acid beta-oxidation. Key enzyme of fatty acid beta-oxidation. Able to isomerize both 3-cis (3Z) and 3-trans (3E) double bonds into the 2-trans (2E) form in a range of enoyl-CoA species, with a preference for (3Z)-enoyl-CoAs over (3E)-enoyl-CoAs. The catalytic efficiency of this enzyme is not affected by the fatty acyl chain length. The chain is Enoyl-CoA delta isomerase 1, mitochondrial from Rattus norvegicus (Rat).